The following is a 396-amino-acid chain: Purine ribonucleoside efflux pump NepI (396 aa).

The Cytoplasmic segment spans residues 1-21; the sequence is MSEFIAENRGANAITRPNWSA. Residues 22-42 traverse the membrane as a helical segment; it reads VFSVAFCVACLIIVEFLPVSL. Residues 43-54 are Periplasmic-facing; sequence LTPMAQDLGISE. Residues 55-75 form a helical membrane-spanning segment; it reads GVAGQSVTVTAFVAMFASLFI. Residues 76-85 are Cytoplasmic-facing; the sequence is TQTIQATDRR. A helical membrane pass occupies residues 86-106; it reads YVVILFAVLLTLSCLLVSFAN. Ser-107 is a topological domain (periplasmic). Residues 108-128 traverse the membrane as a helical segment; sequence FSLLLIGRACLGLALGGFWAM. Over 129–147 the chain is Cytoplasmic; the sequence is SASLTMRLVPPRTVPKALS. The chain crosses the membrane as a helical span at residues 148–168; it reads VIFGAVSIALVIAAPLGSFLG. Over 169-175 the chain is Periplasmic; the sequence is ELIGWRN. A helical transmembrane segment spans residues 176-196; the sequence is VFNAAAAMGVLCIFWIIKSLP. Over 197 to 215 the chain is Cytoplasmic; that stretch reads SLPGEPSHQKQNTFRLLQR. A helical membrane pass occupies residues 216–236; it reads PGVMAGMIAIFMSFAGQFAFF. The Periplasmic portion of the chain corresponds to 237–255; that stretch reads TYIRPVYMNLAGFGVDGLT. The chain crosses the membrane as a helical span at residues 256-276; it reads LVLLSFGIASFVGTSLSSFIL. The Cytoplasmic segment spans residues 277–281; sequence KRSVK. Residues 282–302 traverse the membrane as a helical segment; sequence LALAGAPFVLALSALVLTLWG. The Periplasmic portion of the chain corresponds to 303–305; it reads SYK. The chain crosses the membrane as a helical span at residues 306–326; the sequence is IVATGVAIIWGLTFALIPVGW. Topologically, residues 327-343 are cytoplasmic; sequence STWITRSLADQAEKAGS. A helical membrane pass occupies residues 344–364; sequence IQVAVIQLANTCGAAIGGYAL. Topologically, residues 365-366 are periplasmic; sequence DN. The helical transmembrane segment at 367–387 threads the bilayer; the sequence is IGLTSPLMLSGTLMLLTALLV. At 388 to 396 the chain is on the cytoplasmic side; it reads TAKVKMKKS.

The protein belongs to the major facilitator superfamily. DHA1 family. NepI (TC 2.A.1.2.26) subfamily.

It localises to the cell inner membrane. It catalyses the reaction inosine(in) + H(+)(out) = inosine(out) + H(+)(in). The enzyme catalyses guanosine(in) + H(+)(out) = guanosine(out) + H(+)(in). Functionally, involved in the efflux of purine ribonucleosides, such as inosine and guanosine. This is Purine ribonucleoside efflux pump NepI from Escherichia coli O6:H1 (strain CFT073 / ATCC 700928 / UPEC).